The primary structure comprises 394 residues: Salivary plasminogen activator gamma (394 aa).

Positions 1 to 36 (MVNTMKTKLLCVLLLCGAVFSLPRQETYRQLARGSR) are cleaved as a signal peptide. One can recognise a Kringle domain in the interval 45–126 (CYKDQGVTYR…TSESCSVPVC (82 aa)). Cystine bridges form between cysteine 45–cysteine 126, cysteine 66–cysteine 108, cysteine 97–cysteine 121, cysteine 131–cysteine 262, cysteine 174–cysteine 190, cysteine 182–cysteine 251, cysteine 276–cysteine 351, cysteine 308–cysteine 324, and cysteine 341–cysteine 369. One can recognise a Peptidase S1 domain in the interval 143-393 (STGGLFTDIT…YLGWIRDNMR (251 aa)). Catalysis depends on charge relay system residues histidine 189 and aspartate 238. N-linked (GlcNAc...) asparagine glycosylation is present at asparagine 315. Catalysis depends on serine 345, which acts as the Charge relay system.

Belongs to the peptidase S1 family. Monomer.

The protein resides in the secreted. It catalyses the reaction Specific cleavage of Arg-|-Val bond in plasminogen to form plasmin.. In terms of biological role, probably essential to support the feeding habits of this exclusively haematophagous animal. Probable potent thrombolytic agent. The chain is Salivary plasminogen activator gamma from Desmodus rotundus (Vampire bat).